The following is a 262-amino-acid chain: Ribosomal RNA small subunit methyltransferase A (262 aa).

His-19, Leu-21, Gly-44, Glu-65, Asp-90, and Asn-109 together coordinate S-adenosyl-L-methionine. Positions 218 to 246 (LPNNLPGPLRERAEEALAGLGHGPDARAE) are disordered.

It belongs to the class I-like SAM-binding methyltransferase superfamily. rRNA adenine N(6)-methyltransferase family. RsmA subfamily.

It localises to the cytoplasm. The enzyme catalyses adenosine(1518)/adenosine(1519) in 16S rRNA + 4 S-adenosyl-L-methionine = N(6)-dimethyladenosine(1518)/N(6)-dimethyladenosine(1519) in 16S rRNA + 4 S-adenosyl-L-homocysteine + 4 H(+). Its function is as follows. Specifically dimethylates two adjacent adenosines (A1518 and A1519) in the loop of a conserved hairpin near the 3'-end of 16S rRNA in the 30S particle. May play a critical role in biogenesis of 30S subunits. The protein is Ribosomal RNA small subunit methyltransferase A of Rubrobacter xylanophilus (strain DSM 9941 / JCM 11954 / NBRC 16129 / PRD-1).